We begin with the raw amino-acid sequence, 481 residues long: uncharacterized protein (481 aa).

10 helical membrane-spanning segments follow: residues 32–52, 82–102, 137–157, 173–193, 204–224, 258–278, 289–309, 348–368, 392–412, and 418–438; these read LSWL…YWGV, FFHW…IMAY, MFLI…AATF, VQAF…WIGI, VGWG…TEFI, WTVF…MFVT, VIWG…GVME, LFLA…MDAV, LFWC…GASL, and TVVL…GGFI.

This sequence belongs to the BCCT transporter (TC 2.A.15) family.

It localises to the cell inner membrane. Functionally, probable transporter whose substrate is unknown. Is not involved in aerobic D-malate transport. This is an uncharacterized protein from Escherichia coli (strain K12).